Reading from the N-terminus, the 235-residue chain is 7-cyano-7-deazaguanine synthase (235 aa).

13-23 (FSGGLDSTTCL) contacts ATP. Positions 197, 207, 210, and 213 each coordinate Zn(2+).

Belongs to the QueC family. It depends on Zn(2+) as a cofactor.

The catalysed reaction is 7-carboxy-7-deazaguanine + NH4(+) + ATP = 7-cyano-7-deazaguanine + ADP + phosphate + H2O + H(+). It functions in the pathway purine metabolism; 7-cyano-7-deazaguanine biosynthesis. In terms of biological role, catalyzes the ATP-dependent conversion of 7-carboxy-7-deazaguanine (CDG) to 7-cyano-7-deazaguanine (preQ(0)). The sequence is that of 7-cyano-7-deazaguanine synthase from Solidesulfovibrio magneticus (strain ATCC 700980 / DSM 13731 / RS-1) (Desulfovibrio magneticus).